We begin with the raw amino-acid sequence, 89 residues long: Large ribosomal subunit protein bL27 (89 aa).

A disordered region spans residues 1–26; sequence MAHKKAGGSSKNGRDSNAQRRGVKRF.

Belongs to the bacterial ribosomal protein bL27 family.

This chain is Large ribosomal subunit protein bL27, found in Maridesulfovibrio salexigens (strain ATCC 14822 / DSM 2638 / NCIMB 8403 / VKM B-1763) (Desulfovibrio salexigens).